The sequence spans 853 residues: Auxin response factor 23 (853 aa).

Residues Pro-118–His-141 are disordered. A DNA-binding region (TF-B3) is located at residues Phe-149 to Met-251. 2 disordered regions span residues Glu-422 to Met-484 and Pro-647 to Ser-723. Positions Pro-425–Lys-455 are enriched in polar residues. A compositionally biased stretch (basic and acidic residues) spans Glu-672 to Asp-686. Residues Pro-706–Ser-723 show a composition bias toward polar residues. Positions Arg-725 to Glu-809 constitute a PB1 domain. A disordered region spans residues Pro-815–Cys-853. A compositionally biased stretch (polar residues) spans Leu-843–Cys-853.

Belongs to the ARF family. In terms of assembly, homodimers and heterodimers. Interacts with CRL1. As to expression, expressed in roots, culms, leaves and young panicles.

It is found in the nucleus. Functionally, auxin response factors (ARFs) are transcriptional factors that bind specifically to the DNA sequence 5'-TGTCTC-3' found in the auxin-responsive promoter elements (AuxREs). In Oryza sativa subsp. japonica (Rice), this protein is Auxin response factor 23 (ARF23).